Consider the following 551-residue polypeptide: Interleukin-2 receptor subunit beta (551 aa).

The N-terminal stretch at 1 to 26 (MAAPALSWRLPLLILLLPLATPWASA) is a signal peptide. The Extracellular portion of the chain corresponds to 27 to 240 (TVNGTSQFTC…TKPASLGKDT (214 aa)). N-linked (GlcNAc...) asparagine glycans are attached at residues N29, N43, and N71. C36 and C46 are oxidised to a cystine. An intrachain disulfide couples C74 to C86. The region spanning 134–234 (APISLQVVHV…QPLAFRTKPA (101 aa)) is the Fibronectin type-III domain. A glycan (N-linked (GlcNAc...) asparagine) is linked at N149. The short motif at 220 to 224 (WSPWS) is the WSXWS motif element. Residues 241 to 265 (IPWLGHLLVGLSGAFGFIILVYLLI) traverse the membrane as a helical segment. At 266-551 (NCRNTGPWLK…LQGQDPTHLV (286 aa)) the chain is on the cytoplasmic side. The short motif at 278–286 (LKCHTPDPS) is the Box 1 motif element. Disordered stretches follow at residues 393 to 412 (DEGV…QPLS) and 433 to 476 (SLLG…GPPT).

Belongs to the type I cytokine receptor family. Type 4 subfamily. As to quaternary structure, non-covalent dimer of an alpha and a beta subunit. IL2R exists in 3 different forms: a high affinity dimer, an intermediate affinity monomer (beta subunit), and a low affinity monomer (alpha subunit). The high and intermediate affinity forms also associate with a gamma subunit. Interacts with SHB upon interleukin stimulation.

Its subcellular location is the cell membrane. The protein localises to the cell surface. Its function is as follows. Receptor for interleukin-2. This beta subunit is involved in receptor mediated endocytosis and transduces the mitogenic signals of IL2. Probably in association with IL15RA, involved in the stimulation of neutrophil phagocytosis by IL15. The chain is Interleukin-2 receptor subunit beta (IL2RB) from Pan troglodytes (Chimpanzee).